The following is a 188-amino-acid chain: Elongation factor P (188 aa).

It belongs to the elongation factor P family.

The protein localises to the cytoplasm. The protein operates within protein biosynthesis; polypeptide chain elongation. Functionally, involved in peptide bond synthesis. Stimulates efficient translation and peptide-bond synthesis on native or reconstituted 70S ribosomes in vitro. Probably functions indirectly by altering the affinity of the ribosome for aminoacyl-tRNA, thus increasing their reactivity as acceptors for peptidyl transferase. The chain is Elongation factor P from Phocaeicola vulgatus (strain ATCC 8482 / DSM 1447 / JCM 5826 / CCUG 4940 / NBRC 14291 / NCTC 11154) (Bacteroides vulgatus).